Reading from the N-terminus, the 117-residue chain is Immunoglobulin lambda variable 1-47 (117 aa).

The signal sequence occupies residues 1-19; the sequence is MAGFPLLLTLLTHCAGSWA. Q20 is subject to Pyrrolidone carboxylic acid. The tract at residues 20-44 is framework-1; that stretch reads QSVLTQPPSASGTPGQRVTISCSGS. An Ig-like domain is found at 20 to 117; the sequence is QSVLTQPPSA…CAAWDDSLSG (98 aa). A disulfide bond links C41 and C108. The complementarity-determining-1 stretch occupies residues 45-52; it reads SSNIGSNY. The framework-2 stretch occupies residues 53 to 69; it reads VYWYQQLPGTAPKLLIY. The tract at residues 70–72 is complementarity-determining-2; sequence SNN. The interval 73–108 is framework-3; that stretch reads QRPSGVPDRFSGSKSGTSASLAISGLRSEDEADYYC. The complementarity-determining-3 stretch occupies residues 109-117; it reads AAWDDSLSG.

As to quaternary structure, immunoglobulins are composed of two identical heavy chains and two identical light chains; disulfide-linked.

The protein resides in the secreted. The protein localises to the cell membrane. Its function is as follows. V region of the variable domain of immunoglobulin light chains that participates in the antigen recognition. Immunoglobulins, also known as antibodies, are membrane-bound or secreted glycoproteins produced by B lymphocytes. In the recognition phase of humoral immunity, the membrane-bound immunoglobulins serve as receptors which, upon binding of a specific antigen, trigger the clonal expansion and differentiation of B lymphocytes into immunoglobulins-secreting plasma cells. Secreted immunoglobulins mediate the effector phase of humoral immunity, which results in the elimination of bound antigens. The antigen binding site is formed by the variable domain of one heavy chain, together with that of its associated light chain. Thus, each immunoglobulin has two antigen binding sites with remarkable affinity for a particular antigen. The variable domains are assembled by a process called V-(D)-J rearrangement and can then be subjected to somatic hypermutations which, after exposure to antigen and selection, allow affinity maturation for a particular antigen. The chain is Immunoglobulin lambda variable 1-47 from Homo sapiens (Human).